A 167-amino-acid chain; its full sequence is Large ribosomal subunit protein uL10 (167 aa).

The protein belongs to the universal ribosomal protein uL10 family. Part of the ribosomal stalk of the 50S ribosomal subunit. The N-terminus interacts with L11 and the large rRNA to form the base of the stalk. The C-terminus forms an elongated spine to which L12 dimers bind in a sequential fashion forming a multimeric L10(L12)X complex.

Functionally, forms part of the ribosomal stalk, playing a central role in the interaction of the ribosome with GTP-bound translation factors. The polypeptide is Large ribosomal subunit protein uL10 (Ligilactobacillus salivarius (strain UCC118) (Lactobacillus salivarius)).